Reading from the N-terminus, the 115-residue chain is Thioredoxin-1 (115 aa).

Residues 2 to 114 form the Thioredoxin domain; the sequence is LKRCNFKNQV…RQKVLEHVSA (113 aa). Residues Cys-39 and Cys-42 each act as nucleophile in the active site. Cys-39 and Cys-42 are joined by a disulfide.

The protein belongs to the thioredoxin family. Expressed in ASJ and ASI ciliated sensory neurons. Expressed in the intestine (at protein level).

Its function is as follows. Participates in various redox reactions through the reversible oxidation of its active center dithiol to a disulfide and catalyzes dithiol-disulfide exchange reactions. Shown to facilitate the reduction of insulin disulfide bonds. Might play a role in the reversible nitrosylation of cysteine residues in target proteins, and thereby contributing to the response to intracellular nitric oxide. Shapes the ASJ sensory neuron biphasic response to nitric oxide (NO) exposure; trans-nitrosylation activity might inhibit calcium flux to the cytoplasm in ASJ neurons when exposed to a NO stimulus, whereas de-nitrosylation activity might promote calcium flux when NO is diminished. By regulating the NO-induced ASJ sensory neuron activity, mediates the avoidance response to NO-producing organisms like P.aeruginosa. Positively regulates life span extension under normal and caloric restriction conditions, dauer formation and the oxidative stress response. Contributes to the down-regulation of expression of the insulin-like neuropeptide daf-28 in the ASJ neurons in a redox-independent fashion, thereby promoting dauer formation. Negatively regulates the nuclear localization of the intestinal skn-1 transcription factor in a p38 MAPK pathway-dependent and redox-independent fashion. This Caenorhabditis elegans protein is Thioredoxin-1 (trx-1).